The chain runs to 309 residues: MENVTFVSNSHQRPAADNLQKLKSLLTNTRQQIKSQTQQVTIKNLYVSSFTLVCFRSGKLTISNNHDTIYCDEPGMLVLKKEQVVNVTLEEVNGHMDFDILEIPTQRLGALYALIPNEQQTKMAVPTEKAQKIFYTPDFPARREVFEHLKTAFSCTKDTSKGCSNCNNKSCIENEELIPYFLLFLLTAFLRLPESYEIILSSAQITLKERVYNIISSSPSRQWKLTDVADHIFMSTSTLKRKLAEEGTSFSDIYLSARMNQAAKLLRIGNHNVNAVALKCGYDSTSYFIQCFKKYFKTTPSTFIKMANH.

The HTH araC/xylS-type domain occupies glutamate 209–methionine 306. 2 DNA-binding regions (H-T-H motif) span residues threonine 226–glycine 247 and valine 273–phenylalanine 296.

This chain is Transcriptional regulator HilD (hilD), found in Salmonella typhimurium (strain SL1344).